The following is a 205-amino-acid chain: SREBP regulating gene protein (205 aa).

Residues 1–16 (MLNLAALLWRRLLRKR) are Cytoplasmic-facing. The helical transmembrane segment at 17–35 (WVLALVFGLSLVYFLSSTF) threads the bilayer. Topologically, residues 36–205 (KQEERAVRDR…GESPPELFPA (170 aa)) are lumenal. N67 carries N-linked (GlcNAc...) asparagine glycosylation.

It belongs to the SPRING family. As to quaternary structure, interacts with SCAP. Ubiquitously expressed with a slightly higher expression in the liver and kidney.

The protein localises to the golgi apparatus membrane. In terms of biological role, positively regulates hepatic SREBP signaling pathway by modulating the proper localization of SCAP (SREBP cleavage-activating protein) to the endoplasmic reticulum, thereby controlling the level of functional SCAP. Plays a crucial role during embryogenesis. The chain is SREBP regulating gene protein (Spring1) from Mus musculus (Mouse).